Reading from the N-terminus, the 370-residue chain is Probable G-protein coupled receptor 85 (370 aa).

The Extracellular segment spans residues 1–25 (MANYSHAADNILQNLSPLTAFLKLT). Asparagine 3 is a glycosylation site (N-linked (GlcNAc...) asparagine). The chain crosses the membrane as a helical span at residues 26-46 (SLGFIIGVSVVGNLLISILLV). The Cytoplasmic portion of the chain corresponds to 47–57 (KDKTLHRAPYY). Residues 58–78 (FLLDLCCSDILRSAICFPFVF) form a helical membrane-spanning segment. Over 79 to 96 (NSVKNGSTWTYGTLTCKV) the chain is Extracellular. A glycan (N-linked (GlcNAc...) asparagine) is linked at asparagine 83. Cysteine 94 and cysteine 172 are disulfide-bonded. The helical transmembrane segment at 97–117 (IAFLGVLSCFHTAFMLFCISV) threads the bilayer. Residues 118–137 (TRYLAIAHHRFYTKRLTFWT) are Cytoplasmic-facing. The helical transmembrane segment at 138-158 (CLAVICMVWTLSVAMAFPPVL) threads the bilayer. Residues 159–188 (DVGTYSFIREEDQCTFQHRSFRANDSLGFM) lie on the Extracellular side of the membrane. N-linked (GlcNAc...) asparagine glycosylation occurs at asparagine 182. A helical transmembrane segment spans residues 189–209 (LLLALILLATQLVYLKLIFFV). Over 210–286 (HDRRKMKPVQ…FKMEKRISRM (77 aa)) the chain is Cytoplasmic. A helical membrane pass occupies residues 287–307 (FYIMTFLFLTLWGPYLVACYW). Over 308 to 313 (RVFARG) the chain is Extracellular. Residues 314–334 (PVVPGGFLTAAVWMSFAQAGI) form a helical membrane-spanning segment. The Cytoplasmic portion of the chain corresponds to 335-370 (NPFVCIFSNRELRRCFSTTLLYCRKSRLPREPYCVI).

Belongs to the G-protein coupled receptor 1 family. In terms of assembly, interacts with DLG4 and DLG3. Highly expressed in brain and testis. Lower levels in small intestine, placenta and spleen. In brain regions, detected in all regions tested, but somewhat lower levels in the corpus callosum, medulla and spinal cord.

It is found in the cell membrane. The protein localises to the endoplasmic reticulum. Functionally, orphan receptor. The polypeptide is Probable G-protein coupled receptor 85 (GPR85) (Homo sapiens (Human)).